A 132-amino-acid chain; its full sequence is Small ribosomal subunit protein uS8 (132 aa).

This sequence belongs to the universal ribosomal protein uS8 family. In terms of assembly, part of the 30S ribosomal subunit. Contacts proteins S5 and S12.

Its function is as follows. One of the primary rRNA binding proteins, it binds directly to 16S rRNA central domain where it helps coordinate assembly of the platform of the 30S subunit. The sequence is that of Small ribosomal subunit protein uS8 from Gluconobacter oxydans (strain 621H) (Gluconobacter suboxydans).